A 66-amino-acid polypeptide reads, in one-letter code: DNA-directed RNA polymerase subunit Rpo10 (66 aa).

Residues Cys-7, Cys-10, Cys-44, and Cys-45 each coordinate Zn(2+).

The protein belongs to the archaeal Rpo10/eukaryotic RPB10 RNA polymerase subunit family. As to quaternary structure, part of the RNA polymerase complex. Requires Zn(2+) as cofactor.

It is found in the cytoplasm. It catalyses the reaction RNA(n) + a ribonucleoside 5'-triphosphate = RNA(n+1) + diphosphate. Its function is as follows. DNA-dependent RNA polymerase (RNAP) catalyzes the transcription of DNA into RNA using the four ribonucleoside triphosphates as substrates. The chain is DNA-directed RNA polymerase subunit Rpo10 from Pyrobaculum aerophilum (strain ATCC 51768 / DSM 7523 / JCM 9630 / CIP 104966 / NBRC 100827 / IM2).